The following is a 522-amino-acid chain: Na(+)/H(+) antiporter NhaB (522 aa).

9 helical membrane-spanning segments follow: residues 13 to 33 (FLGN…IINP), 98 to 118 (LLLV…LFVF), 140 to 160 (AFLS…SVSV), 239 to 259 (FFIR…LVCL), 304 to 324 (AIIG…LVGL), 356 to 376 (LTVF…TPII), 390 to 410 (LFYL…VGTV), 446 to 466 (ATPN…APLI), and 477 to 497 (ALPY…FLLV).

This sequence belongs to the NhaB Na(+)/H(+) (TC 2.A.34) antiporter family.

The protein localises to the cell inner membrane. The catalysed reaction is 2 Na(+)(in) + 3 H(+)(out) = 2 Na(+)(out) + 3 H(+)(in). Na(+)/H(+) antiporter that extrudes sodium in exchange for external protons. In Yersinia pestis bv. Antiqua (strain Angola), this protein is Na(+)/H(+) antiporter NhaB.